Here is a 423-residue protein sequence, read N- to C-terminus: Phosphoribosylamine--glycine ligase (423 aa).

Residues Lys-107–Thr-312 enclose the ATP-grasp domain. Position 133–193 (Ile-133–Ser-193) interacts with ATP. Glu-282 and Asn-284 together coordinate Mg(2+).

It belongs to the GARS family. Mg(2+) serves as cofactor. Mn(2+) is required as a cofactor.

It carries out the reaction 5-phospho-beta-D-ribosylamine + glycine + ATP = N(1)-(5-phospho-beta-D-ribosyl)glycinamide + ADP + phosphate + H(+). It participates in purine metabolism; IMP biosynthesis via de novo pathway; N(1)-(5-phospho-D-ribosyl)glycinamide from 5-phospho-alpha-D-ribose 1-diphosphate: step 2/2. The chain is Phosphoribosylamine--glycine ligase from Rhizobium meliloti (strain 1021) (Ensifer meliloti).